We begin with the raw amino-acid sequence, 362 residues long: 11-beta-hydroxysteroid dehydrogenase B (362 aa).

A helical; Signal-anchor for type II membrane protein membrane pass occupies residues 10 to 30; sequence FVVPPASLLMLAFTWPTLFFI. Positions 13–26 match the Proline-knob motif; it reads PPASLLMLAFTWPT. NADP(+) is bound at residue 55–81; the sequence is GASSGIGEQIAYQYAKRGANLVLVARR. A substrate-binding site is contributed by Ser-185. Tyr-198 (proton acceptor) is an active-site residue. NADP(+) contacts are provided by residues 198 to 202 and Lys-202; that span reads YSAAK. Positions 321–362 are disordered; the sequence is TGRPLLETSSPRRSAVMEGSSPRRLPPGPLTFSPAFQQQKSE.

It belongs to the short-chain dehydrogenases/reductases (SDR) family. As to expression, expressed in seeds (at protein level). Not expressed in stem, leaf or root (at protein level).

The protein resides in the lipid droplet. It is found in the membrane. The enzyme catalyses an 11beta-hydroxysteroid + NADP(+) = an 11-oxosteroid + NADPH + H(+). It carries out the reaction corticosterone + NADP(+) = 11-dehydrocorticosterone + NADPH + H(+). The catalysed reaction is 17beta-estradiol + NADP(+) = estrone + NADPH + H(+). Its function is as follows. Has dehydrogenase activity against corticosterone (11 beta-hydroxysteroid) and estradiol (17 beta-hydroxysteroid), with similar activities to both sterols in the presence of NADP(+), but negligible activity to either sterol in the presence of NAD(+). May be involved in signal transduction regulated by various sterols. This is 11-beta-hydroxysteroid dehydrogenase B from Sesamum indicum (Oriental sesame).